The following is a 472-amino-acid chain: MSQRQFKVIIIGGSVTGLTLAHSLHKIGIDYVVLEKRDTVTPQEGASIGILPNGARILDQLGLYEAIEDEAPPLGATRIHFPDGFAFTSLYPKRMRHSFGYPIAFLERRQLLRILYDALPDKTRIHVNKTMSTIEHFTKDEITGARVLTKEGDVYEGDLIVGADGIHSQTRGEIWRRINSSKSAFKTAEEYSCCFGISKCVTGLIAGEQVMHMRNGRTLVVIPSKDEVVFWFLVEKLDRKYTYSEAPRFTIDDATALCSQVFTLPIGNNIKFEDVWNKREVVNMLSLEESCLSTWSTGRLVCIGDSIHKMTVNLGQGANCAIEDVAVLCNLLRNMCQLKSGTRPTEQEIDLLLRRFNKQHLSRVTQITNMSKLTVRVHARKGVLHRLVGRYVMPYFGAYFEARPFNMLADAASLDFIPLPKSSYPGWEKYSSKTRGNSRLLPLMFTLPLLYFGLSWIVGIYWKPGYLHAWNS.

The N-terminal stretch at methionine 1–leucine 24 is a signal peptide. Glutamate 35, glycine 49, and arginine 108 together coordinate FAD. N-linked (GlcNAc...) asparagine glycans are attached at residues asparagine 128 and asparagine 179. FAD-binding residues include aspartate 305 and alanine 318. Asparagine 369 carries N-linked (GlcNAc...) asparagine glycosylation. Residues leucine 440–isoleucine 460 form a helical membrane-spanning segment.

This sequence belongs to the paxM FAD-dependent monooxygenase family. The cofactor is FAD.

The protein localises to the membrane. The protein operates within secondary metabolite biosynthesis; terpenoid biosynthesis. Functionally, FAD-dependent monooxygenase; part of the gene cluster that mediates the biosynthesis of the diterpenoid pyrones subglutinols A and B. The first step of the pathway is the synthesis of the alpha-pyrone moiety by the polyketide synthase dpmaA via condensation of one acetyl-CoA starter unit with 3 malonyl-CoA units and 2 methylations. The alpha-pyrone is then combined with geranylgeranyl pyrophosphate (GGPP) formed by the GGPP synthase dpmaD through the action of the prenyltransferase dpmaC to yield a linear alpha-pyrone diterpenoid. Subsequent steps in the diterpenoid pyrone biosynthetic pathway involve the decalin core formation, which is initiated by the epoxidation of the C10-C11 olefin by the FAD-dependent oxidoreductase dpmaE, and is followed by a cyclization cascade catalyzed by the terpene cyclase dpmaB. The dehydrogenase dpmaF is then involved in tetrahydrofuran (THF) ring formation at the C5 unit to complete the formation of subglutinols A and B. This is FAD-dependent monooxygenase dpmaE from Metarhizium anisopliae (Entomophthora anisopliae).